Consider the following 57-residue polypeptide: uncharacterized protein (57 aa).

Functionally, proetin of unknown function whose overexpression causes growth inhibition. Overexpression increases the expression of ergosterol synthesis genes. This is an uncharacterized protein from Saccharomyces cerevisiae (strain ATCC 204508 / S288c) (Baker's yeast).